Here is a 438-residue protein sequence, read N- to C-terminus: Aspartate--tRNA(Asp/Asn) ligase (438 aa).

E176 contributes to the L-aspartate binding site. The segment at 198-201 is aspartate; that stretch reads QLYK. R220 contributes to the L-aspartate binding site. Residues 220–222, 228–230, and E361 contribute to the ATP site; these read RAE and RHL. 2 residues coordinate Mg(2+): E361 and S364. The L-aspartate site is built by S364 and R368. An ATP-binding site is contributed by 409-412; sequence GADR.

The protein belongs to the class-II aminoacyl-tRNA synthetase family. Type 2 subfamily. In terms of assembly, homodimer. The cofactor is Mg(2+).

Its subcellular location is the cytoplasm. It catalyses the reaction tRNA(Asx) + L-aspartate + ATP = L-aspartyl-tRNA(Asx) + AMP + diphosphate. Its function is as follows. Aspartyl-tRNA synthetase with relaxed tRNA specificity since it is able to aspartylate not only its cognate tRNA(Asp) but also tRNA(Asn). Reaction proceeds in two steps: L-aspartate is first activated by ATP to form Asp-AMP and then transferred to the acceptor end of tRNA(Asp/Asn). This chain is Aspartate--tRNA(Asp/Asn) ligase, found in Methanocaldococcus jannaschii (strain ATCC 43067 / DSM 2661 / JAL-1 / JCM 10045 / NBRC 100440) (Methanococcus jannaschii).